A 737-amino-acid chain; its full sequence is MSQNIQIGTRKRSRANMNNSTTTGPANNTSSNKTFLDNFEETRTNKLLDEMFARQNSFLTDNLRNSLDLNQADNPLRPRQHQHQLFLDNENAIELDEEPRIINTTINNSNNHNSSRVDEDADDDIIFIKEQPIQFSSPLILPSSSSINNNNNIVTSNNPGCGTAATSNSTYITTPKKFKKQRTISLPQLPLSKLSYQSNYFNVPDQTNAIVPRVTQTENELLHLTGSCAKTLEGNKAVNLTIAHSTSPFSNPPAQIASLPQSNLKKQIGSSLRKFTSNGSSESASSNKSNFKTDKDGHYVYQENDIFGSGGRFVVKDLLGQGTFGKVLKCIDNKYEPNYVAVKVIRAVDRYREAAKTELRILQTILNNDPQGQFQCLLLRECFDYKNHICLVTDLYGRSIYDFMCSNGIARFPGSHIQAIARQLIRSVCFLHDLGIIHTDLKPENILICDETHIAQKLPLKTVQSLSKRRREASKGKRKILKNPEIKIIDFGSAIFHYEYHPPVISTRHYRAPEIVLGLGWSFPCDIWSIACVLVELVIGESLYPIHENLEHMAMMQRINGTPFPTDIIDKMFYKSKHKLGNSPSDLNSTVIKHFDRKTLSLQWPEKNKRGDTITTEKSMKRVLQSCDRLDIYISKVLKQDYGDSLSINWNLPPEKNWSLINSKLAWKRQTHSSSSSTTDELDKETFLFWYWFIDLLRKMFEFDPTKRITAKDALDHEWFNLGILDDGIATYNNTQG.

Disordered regions lie at residues 1 to 33 (MSQN…SSNK) and 270 to 290 (SSLR…NKSN). A compositionally biased stretch (polar residues) spans 15 to 33 (ANMNNSTTTGPANNTSSNK). Over residues 277–290 (SNGSSESASSNKSN) the composition is skewed to low complexity. The 408-residue stretch at 313-720 (FVVKDLLGQG…AKDALDHEWF (408 aa)) folds into the Protein kinase domain. Residues 319–327 (LGQGTFGKV) and Lys-343 each bind ATP. Residue Asp-440 is the Proton acceptor of the active site. Thr-562 is modified (phosphothreonine).

Belongs to the protein kinase superfamily. CMGC Ser/Thr protein kinase family. Lammer subfamily. Post-translationally, phosphorylated (auto-) on Ser/Thr/Tyr.

It catalyses the reaction L-seryl-[protein] + ATP = O-phospho-L-seryl-[protein] + ADP + H(+). It carries out the reaction L-threonyl-[protein] + ATP = O-phospho-L-threonyl-[protein] + ADP + H(+). The enzyme catalyses L-tyrosyl-[protein] + ATP = O-phospho-L-tyrosyl-[protein] + ADP + H(+). Its function is as follows. Nonessential protein kinase. The chain is Dual specificity protein kinase KNS1 (KNS1) from Saccharomyces cerevisiae (strain ATCC 204508 / S288c) (Baker's yeast).